A 461-amino-acid polypeptide reads, in one-letter code: tRNA modification GTPase MnmE (461 aa).

Residues R22, E87, and R126 each coordinate (6S)-5-formyl-5,6,7,8-tetrahydrofolate. In terms of domain architecture, TrmE-type G spans 222–382 (GITAVIAGKP…LENKLYEILI (161 aa)). Residue N232 coordinates K(+). GTP contacts are provided by residues 232-237 (NVGKSS), 251-257 (TDIPGTT), 276-279 (DTAG), and 363-365 (SAR). S236 contributes to the Mg(2+) binding site. The K(+) site is built by T251, I253, and T256. T257 lines the Mg(2+) pocket. K461 provides a ligand contact to (6S)-5-formyl-5,6,7,8-tetrahydrofolate.

This sequence belongs to the TRAFAC class TrmE-Era-EngA-EngB-Septin-like GTPase superfamily. TrmE GTPase family. As to quaternary structure, homodimer. Heterotetramer of two MnmE and two MnmG subunits. The cofactor is K(+).

The protein localises to the cytoplasm. Functionally, exhibits a very high intrinsic GTPase hydrolysis rate. Involved in the addition of a carboxymethylaminomethyl (cmnm) group at the wobble position (U34) of certain tRNAs, forming tRNA-cmnm(5)s(2)U34. This Carboxydothermus hydrogenoformans (strain ATCC BAA-161 / DSM 6008 / Z-2901) protein is tRNA modification GTPase MnmE.